We begin with the raw amino-acid sequence, 356 residues long: Solute carrier family 25 member 3 (356 aa).

The transit peptide at 1–44 (MFSSVAHLARANPFNAPHLQLVHDVSGPRSPPGPPRRSRHLAAA) directs the protein to the mitochondrion. Over 45–57 (AVEGYSCEFGSMK) the chain is Mitochondrial intermembrane. Solcar repeat units lie at residues 57–141 (KYYA…FKAL), 154–238 (WRTS…TVEA), and 255–333 (EQLV…VKVY). The chain crosses the membrane as a helical span at residues 58 to 80 (YYALCGFGGVLSCGLTHTAVVPL). The Mitochondrial matrix segment spans residues 81–115 (DLVKCRMQVDPQKYKGIFNGFSITLKEDGVRGLAK). Lys-93 carries the N6-acetyllysine modification. Lys-106 is modified (N6-methyllysine). The helical transmembrane segment at 116–135 (GWAPTLIGYSMQGLCKFGFY) threads the bilayer. The Mitochondrial intermembrane portion of the chain corresponds to 136 to 155 (EVFKALYSNILGEENTYLWR). A helical transmembrane segment spans residues 156-177 (TSLYLAASASAEFFADIALAPM). Topologically, residues 178–212 (EAAKVRIQTQPGYANTLREAVPKMYKEEGLNAFYK) are mitochondrial matrix. The residue at position 190 (Tyr-190) is a Phosphotyrosine. N6-acetyllysine is present on Lys-203. The helical transmembrane segment at 213-232 (GVAPVWMRQIPYTMMKFACF) threads the bilayer. Residues 233–255 (ERTVEALYKFVVPKPRSECTKAE) lie on the Mitochondrial intermembrane side of the membrane. Residues 256–278 (QLVVTFVAGYIAGVFCAIVSHPA) traverse the membrane as a helical segment. At 279 to 308 (DSVVSVLNKEKGSTASQVLQRLGFRGVWKG) the chain is on the mitochondrial matrix side. Residues 309-327 (LFARIIMIGTLTALQWFIY) traverse the membrane as a helical segment. Topologically, residues 328 to 356 (DSVKVYFRLPRPPPPEMPESLKKKLGLTE) are mitochondrial intermembrane.

The protein belongs to the mitochondrial carrier (TC 2.A.29) family. In terms of assembly, interacts with PPIF; the interaction is impaired by CsA.

The protein localises to the mitochondrion inner membrane. It carries out the reaction phosphate(in) + H(+)(in) = phosphate(out) + H(+)(out). Inorganic ion transporter that transports phosphate or copper ions across the mitochondrial inner membrane into the matrix compartment. Mediates proton-coupled symport of phosphate ions necessary for mitochondrial oxidative phosphorylation of ADP to ATP. Transports copper ions probably in the form of anionic copper(I) complexes to maintain mitochondrial matrix copper pool and to supply copper for cytochrome C oxidase complex assembly. May also play a role in regulation of the mitochondrial permeability transition pore (mPTP). The chain is Solute carrier family 25 member 3 from Rattus norvegicus (Rat).